An 851-amino-acid polypeptide reads, in one-letter code: Venom phosphodiesterase (851 aa).

An N-terminal signal peptide occupies residues methionine 1–glycine 23. 2 SMB domains span residues proline 30 to threonine 73 and glutamine 74 to serine 118. 16 cysteine pairs are disulfide-bonded: cysteine 34–cysteine 38, cysteine 34–cysteine 51, cysteine 38–cysteine 69, cysteine 49–cysteine 51, cysteine 49–cysteine 62, cysteine 55–cysteine 61, cysteine 62–cysteine 69, cysteine 78–cysteine 83, cysteine 78–cysteine 95, cysteine 83–cysteine 113, cysteine 93–cysteine 95, cysteine 93–cysteine 106, cysteine 99–cysteine 105, cysteine 106–cysteine 113, cysteine 124–cysteine 170, and cysteine 132–cysteine 344. Residue asparagine 39 is glycosylated (N-linked (GlcNAc...) asparagine). The Cell attachment site motif lies at arginine 58–alanine 60. A divalent metal cation is bound by residues aspartate 147 and threonine 185. Threonine 185 (AMP-threonine intermediate) is an active-site residue. Asparagine 216, asparagine 259, and asparagine 270 each carry an N-linked (GlcNAc...) asparagine glycan. Residue lysine 271 coordinates AMP. Residues aspartate 305, histidine 309, aspartate 352, and histidine 353 each coordinate a divalent metal cation. An AMP-binding site is contributed by histidine 309. Cystine bridges form between cysteine 360–cysteine 457, cysteine 408–cysteine 793, cysteine 541–cysteine 599, cysteine 554–cysteine 654, cysteine 556–cysteine 639, and cysteine 762–cysteine 772. Residue asparagine 405 is glycosylated (N-linked (GlcNAc...) asparagine). Residue histidine 462 participates in a divalent metal cation binding. Residues asparagine 512, asparagine 594, and asparagine 745 are each glycosylated (N-linked (GlcNAc...) asparagine).

This sequence belongs to the nucleotide pyrophosphatase/phosphodiesterase family. Monomer cleaved in two subunits; disulfide-linked. Is synthesized as a single-chain protein and is subsequently cleaved to form a two-subunit protein held together with disulfide bonds. The cofactor is a divalent metal cation. Expressed by venom gland.

It localises to the secreted. It catalyses the reaction ADP + H2O = AMP + phosphate + H(+). Hydrolyzes ADP with high activity. Shows weak or no activity on 5'-AMP, 5'-GMP, 3'-AMP, ATP, cAMP, and cGMP. Is devoid of monophosphatase and proteinase activities. Dose-dependently inhibits platelet aggregation induced by ADP (IC(50)=0.99 uM) and collagen (IC(50)=1.4 uM). This Macrovipera lebetinus (Levantine viper) protein is Venom phosphodiesterase.